Consider the following 493-residue polypeptide: tRNA(Ile)-lysidine synthase (493 aa).

26–31 (SGGSDS) provides a ligand contact to ATP.

This sequence belongs to the tRNA(Ile)-lysidine synthase family.

The protein resides in the cytoplasm. It catalyses the reaction cytidine(34) in tRNA(Ile2) + L-lysine + ATP = lysidine(34) in tRNA(Ile2) + AMP + diphosphate + H(+). In terms of biological role, ligates lysine onto the cytidine present at position 34 of the AUA codon-specific tRNA(Ile) that contains the anticodon CAU, in an ATP-dependent manner. Cytidine is converted to lysidine, thus changing the amino acid specificity of the tRNA from methionine to isoleucine. The sequence is that of tRNA(Ile)-lysidine synthase from Bartonella henselae (strain ATCC 49882 / DSM 28221 / CCUG 30454 / Houston 1) (Rochalimaea henselae).